The sequence spans 234 residues: Carboxymethylenebutenolidase 1 (234 aa).

Catalysis depends on residues C123, D171, and H201.

It belongs to the dienelactone hydrolase family. As to quaternary structure, monomer.

The enzyme catalyses 2-(5-oxo-2,5-dihydrofuran-2-ylidene)acetate + H2O = 4-oxohex-2-enedioate + H(+). Its pathway is aromatic compound metabolism; 3-chlorocatechol degradation. Its function is as follows. Ring cleavage of cyclic ester dienelactone to produce maleylacetate. This chain is Carboxymethylenebutenolidase 1 (tfdEI), found in Cupriavidus pinatubonensis (strain JMP 134 / LMG 1197) (Cupriavidus necator (strain JMP 134)).